Consider the following 803-residue polypeptide: H(+)/Cl(-) exchange transporter 7 (803 aa).

Residues 1 to 46 (MANVSKKVSWSGRDRDDEEGAPLLRRTGQPDEETPLLNGAGPGARQ) form a disordered region. Over 1 to 124 (MANVSKKVSW…TAFRTVEIKR (124 aa)) the chain is Cytoplasmic. Ser-9 carries the post-translational modification Phosphoserine. Transmembrane regions (helical) follow at residues 125–157 (WVICALIGILTGLVACFIDIVVENLAGLKYRVI) and 172–195 (FSLLLWATLNSAFVLVGSVIVAFI). The Selectivity filter part_1 motif lies at 201 to 205 (GSGIP). Ser-202 is a chloride binding site. Positions 204–211 (IPQIKCFL) form an intramembrane region, helical. A run of 2 helical transmembrane segments spans residues 221–239 (RLKTLVIKVSGVILSVVGG) and 245–262 (EGPMIHSGSVIAAGISQG). A Selectivity filter part_2 motif is present at residues 243–247 (GKEGP). 2 intramembrane regions (helical) span residues 286–298 (FVSAGAAAGVSAA) and 302–310 (PVGGVLFSL). Transmembrane regions (helical) follow at residues 320–339 (FLTWRIFFASMISTFTLNFV), 373–403 (IPVFIAMGVVGGILGAVFNALNYWLTMFRIR), 408–430 (PCLQVIEAMLVAAVTATVAFVLI), 485–505 (PMTLGLFTLVYFFLACWTYGL), and 510–533 (GVFIPSLLIGAAWGRLFGISLSYL). A Selectivity filter part_3 motif is present at residues 510-514 (GVFIP). Phe-512 lines the chloride pocket. The helical intramembrane region spans 543-557 (GKYALMGAAAQLGGI). An intramembrane region (note=Loop between two helices) is located at residues 558 to 560 (VRM). Residues 561-572 (TLSLTVIMMEAT) constitute an intramembrane region (helical). Positions 573-576 (SNVT) form an intramembrane region, note=Loop between two helices. A helical transmembrane segment spans residues 577-595 (YGFPIMLVLMTAKIVGDVF). Residues 596–803 (IEGLYDMHIQ…GLEELSLAQT (208 aa)) are Cytoplasmic-facing. Tyr-600 contacts chloride. 2 CBS domains span residues 629 to 693 (MSTP…VFVE) and 739 to 797 (MNPS…GLEE). ATP contacts are provided by residues 656–658 (HNG) and 781–784 (TRKD). Ser-799 bears the Phosphoserine mark.

This sequence belongs to the chloride channel (TC 2.A.49) family. ClC-7/CLCN7 subfamily. In terms of assembly, chloride channel 7 are heteromers of alpha (CLCN7) and beta (OSTM1) subunits. Liver, spleen, kidneys and brain.

The protein resides in the lysosome membrane. The enzyme catalyses 2 chloride(in) + H(+)(out) = 2 chloride(out) + H(+)(in). Functionally, slowly voltage-gated channel mediating the exchange of chloride ions against protons. Functions as antiporter and contributes to the acidification of the lysosome lumen and may be involved in maintaining lysosomal pH. The CLC channel family contains both chloride channels and proton-coupled anion transporters that exchange chloride or another anion for protons. The presence of conserved gating glutamate residues is typical for family members that function as antiporters. This chain is H(+)/Cl(-) exchange transporter 7, found in Mus musculus (Mouse).